Consider the following 754-residue polypeptide: LON peptidase N-terminal domain and RING finger protein 2 (754 aa).

2 TPR repeats span residues 23 to 58 (IAQR…QPDR) and 59 to 91 (GLCL…GALR). Residues 112-136 (PLSAENPGGEPEAPGEGGPAPEPRA) are disordered. A compositionally biased stretch (low complexity) spans 115 to 125 (AENPGGEPEAP). TPR repeat units lie at residues 197 to 230 (LRRL…APDD), 231 to 264 (NSLL…EPLL), and 266 to 298 (KGHQ…NPEC). Positions 398–439 (GLKRQFPDDVEDAPDLNAPGKIPKKDLSLQRSPNSETEESQG) are disordered. Residues 426 to 439 (LQRSPNSETEESQG) are compositionally biased toward polar residues. The stretch at 447-483 (FECALCMRLLFEPVTTPCGHTFCLKCLERCLDHAPHC) is one TPR 6 repeat. The segment at 449 to 487 (CALCMRLLFEPVTTPCGHTFCLKCLERCLDHAPHCPLCK) adopts an RING-type zinc-finger fold. The Lon N-terminal domain maps to 528–737 (MSELSNLTRD…AIRRILVIIT (210 aa)).

This chain is LON peptidase N-terminal domain and RING finger protein 2 (LONRF2), found in Homo sapiens (Human).